Here is a 191-residue protein sequence, read N- to C-terminus: MIGKLTGTLLEKNPPEVLLDCHGVGYEVNVPMSSFYNLPAVGERISLLTQFIVREDAQLLYGFATAPERQAFRALIKITGVGPRMALSILSGMSVADLAQAIARQEAARLVKVPGVGKRTAERLLLELKGKLGADLGASHGPAVSGAQADILQALLALGYNDKEAAAALKALPAQVEVSDGIKWALKALTK.

Residues 1–64 form a domain I region; the sequence is MIGKLTGTLL…EDAQLLYGFA (64 aa). Residues 65 to 140 are domain II; it reads TAPERQAFRA…KLGADLGASH (76 aa). Positions 140-142 are flexible linker; that stretch reads HGP. The tract at residues 143–191 is domain III; it reads AVSGAQADILQALLALGYNDKEAAAALKALPAQVEVSDGIKWALKALTK.

This sequence belongs to the RuvA family. In terms of assembly, homotetramer. Forms an RuvA(8)-RuvB(12)-Holliday junction (HJ) complex. HJ DNA is sandwiched between 2 RuvA tetramers; dsDNA enters through RuvA and exits via RuvB. An RuvB hexamer assembles on each DNA strand where it exits the tetramer. Each RuvB hexamer is contacted by two RuvA subunits (via domain III) on 2 adjacent RuvB subunits; this complex drives branch migration. In the full resolvosome a probable DNA-RuvA(4)-RuvB(12)-RuvC(2) complex forms which resolves the HJ.

The protein localises to the cytoplasm. In terms of biological role, the RuvA-RuvB-RuvC complex processes Holliday junction (HJ) DNA during genetic recombination and DNA repair, while the RuvA-RuvB complex plays an important role in the rescue of blocked DNA replication forks via replication fork reversal (RFR). RuvA specifically binds to HJ cruciform DNA, conferring on it an open structure. The RuvB hexamer acts as an ATP-dependent pump, pulling dsDNA into and through the RuvAB complex. HJ branch migration allows RuvC to scan DNA until it finds its consensus sequence, where it cleaves and resolves the cruciform DNA. This chain is Holliday junction branch migration complex subunit RuvA, found in Verminephrobacter eiseniae (strain EF01-2).